Reading from the N-terminus, the 473-residue chain is Pre-mRNA-splicing factor PRP46 (473 aa).

The span at 1–14 shows a compositional bias: polar residues; the sequence is MSTSLETPSGTSAG. Disordered regions lie at residues 1–21 and 103–126; these read MSTSLETPSGTSAGPSIVASG and GPNVKLIGGPEAEKASSSTPQAVA. 7 WD repeats span residues 180–219, 222–261, 264–303, 306–347, 349–388, 391–429, and 440–473; these read GHMGWVRAVAMDPGSQWFATGAGDRVIKIWDLASGELKLS, GHISTIRGLAVSDRHPYLFSCAEDKMVKCWDLETNKVIRH, GHFSGVYSLSVHPTLDVLVTGGRDASVRVWDMRTRANIFT, GHTS…NTLT, HKKSVRALAIHPTEYSFASASSGGNNIKKWKCPEGIFVNN, GHEAIINTLSINSENVLFSGADNGTLTLWDYKTGLPFQH, and DAEAGVFCSTFDKTGTRLITGGADKTIKVYSEQA.

Belongs to the WD repeat PRL1/PRL2 family. Associated with the spliceosome.

The protein resides in the cytoplasm. Its subcellular location is the nucleus. In terms of biological role, involved in pre-mRNA splicing and required for cell cycle progression at G2/M. This chain is Pre-mRNA-splicing factor PRP46 (PRP46), found in Cryptococcus neoformans var. neoformans serotype D (strain B-3501A) (Filobasidiella neoformans).